Here is a 274-residue protein sequence, read N- to C-terminus: Diaminopimelate epimerase (274 aa).

3 residues coordinate substrate: Asn-11, Gln-44, and Asn-64. Cys-73 functions as the Proton donor in the catalytic mechanism. Substrate contacts are provided by residues 74 to 75 (GN), Asn-157, Asn-190, and 208 to 209 (ER). Residue Cys-217 is the Proton acceptor of the active site. 218 to 219 (GS) contacts substrate.

It belongs to the diaminopimelate epimerase family. In terms of assembly, homodimer.

It is found in the cytoplasm. It carries out the reaction (2S,6S)-2,6-diaminopimelate = meso-2,6-diaminopimelate. It functions in the pathway amino-acid biosynthesis; L-lysine biosynthesis via DAP pathway; DL-2,6-diaminopimelate from LL-2,6-diaminopimelate: step 1/1. Its function is as follows. Catalyzes the stereoinversion of LL-2,6-diaminopimelate (L,L-DAP) to meso-diaminopimelate (meso-DAP), a precursor of L-lysine and an essential component of the bacterial peptidoglycan. This is Diaminopimelate epimerase from Pectobacterium carotovorum subsp. carotovorum (strain PC1).